Here is a 483-residue protein sequence, read N- to C-terminus: HSPB1-associated protein 1 (483 aa).

Residues methionine 1–lysine 26 are disordered. The interaction with HSPB1 stretch occupies residues glutamate 88 to arginine 208. The 165-residue stretch at tryptophan 124 to threonine 288 folds into the JmjC domain. A disordered region spans residues leucine 388–histidine 416.

As to quaternary structure, interacts with CRYAB and HSPB1.

Its subcellular location is the cytoplasm. May play a role in cellular stress response. The chain is HSPB1-associated protein 1 (Hspbap1) from Mus musculus (Mouse).